The primary structure comprises 156 residues: Small ribosomal subunit protein bS6 (156 aa).

A disordered region spans residues 95–156 (AITETSPLAK…DRDEQSEDSE (62 aa)). A compositionally biased stretch (basic and acidic residues) spans 117-126 (RSGRDRDESG).

Belongs to the bacterial ribosomal protein bS6 family.

Functionally, binds together with bS18 to 16S ribosomal RNA. The sequence is that of Small ribosomal subunit protein bS6 from Nitrosococcus oceani (strain ATCC 19707 / BCRC 17464 / JCM 30415 / NCIMB 11848 / C-107).